Consider the following 179-residue polypeptide: Large ribosomal subunit protein uL5 (179 aa).

It belongs to the universal ribosomal protein uL5 family. As to quaternary structure, part of the 50S ribosomal subunit; part of the 5S rRNA/L5/L18/L25 subcomplex. Contacts the 5S rRNA and the P site tRNA. Forms a bridge to the 30S subunit in the 70S ribosome.

Its function is as follows. This is one of the proteins that bind and probably mediate the attachment of the 5S RNA into the large ribosomal subunit, where it forms part of the central protuberance. In the 70S ribosome it contacts protein S13 of the 30S subunit (bridge B1b), connecting the 2 subunits; this bridge is implicated in subunit movement. Contacts the P site tRNA; the 5S rRNA and some of its associated proteins might help stabilize positioning of ribosome-bound tRNAs. This is Large ribosomal subunit protein uL5 from Dehalococcoides mccartyi (strain ATCC BAA-2100 / JCM 16839 / KCTC 5957 / BAV1).